The following is a 199-amino-acid chain: Signal peptidase complex subunit 2 (199 aa).

Residues 1–49 (MGKKDEKSQQGEELVKVNKWDGSAVKHALDDAVKTCLLGDRPQLKEQFG) lie on the Cytoplasmic side of the membrane. A helical membrane pass occupies residues 50–72 (LVNTRLALCALAVSVAIMAHAWD). Residues 73 to 81 (FTHPFPESR) are Lumenal-facing. Residues 82-104 (PVLLFSVLAYFALLGILTLHSSF) traverse the membrane as a helical segment. Residues 105–199 (REKGTFAVAL…KKNASSLSSN (95 aa)) are Cytoplasmic-facing.

The protein belongs to the SPCS2 family. In terms of assembly, component of the signal peptidase complex (SPC) composed of a catalytic subunit twr/SEC11 and three accessory subunits Spase12/SPCS1, Spase25/SPCS2 and Spase22-23/SPCS3. The complex induces a local thinning of the ER membrane which is used to measure the length of the signal peptide (SP) h-region of protein substrates. This ensures the selectivity of the complex towards h-regions shorter than 18-20 amino acids.

The protein localises to the endoplasmic reticulum membrane. Functionally, component of the signal peptidase complex (SPC) which catalyzes the cleavage of N-terminal signal sequences from nascent proteins as they are translocated into the lumen of the endoplasmic reticulum. Enhances the enzymatic activity of SPC and facilitates the interactions between different components of the translocation site. This is Signal peptidase complex subunit 2 (Spase25) from Drosophila melanogaster (Fruit fly).